The primary structure comprises 475 residues: Ribulose bisphosphate carboxylase large chain (475 aa).

A propeptide spanning residues methionine 1–serine 2 is cleaved from the precursor. Residue proline 3 is modified to N-acetylproline. An N6,N6,N6-trimethyllysine modification is found at lysine 14. 2 residues coordinate substrate: asparagine 123 and threonine 173. The Proton acceptor role is filled by lysine 175. A substrate-binding site is contributed by lysine 177. Residues lysine 201, aspartate 203, and glutamate 204 each coordinate Mg(2+). Residue lysine 201 is modified to N6-carboxylysine. Histidine 294 acts as the Proton acceptor in catalysis. Positions 295, 327, and 379 each coordinate substrate.

It belongs to the RuBisCO large chain family. Type I subfamily. In terms of assembly, heterohexadecamer of 8 large chains and 8 small chains; disulfide-linked. The disulfide link is formed within the large subunit homodimers. Requires Mg(2+) as cofactor. The disulfide bond which can form in the large chain dimeric partners within the hexadecamer appears to be associated with oxidative stress and protein turnover.

It is found in the plastid. The protein localises to the chloroplast. It carries out the reaction 2 (2R)-3-phosphoglycerate + 2 H(+) = D-ribulose 1,5-bisphosphate + CO2 + H2O. The catalysed reaction is D-ribulose 1,5-bisphosphate + O2 = 2-phosphoglycolate + (2R)-3-phosphoglycerate + 2 H(+). Functionally, ruBisCO catalyzes two reactions: the carboxylation of D-ribulose 1,5-bisphosphate, the primary event in carbon dioxide fixation, as well as the oxidative fragmentation of the pentose substrate in the photorespiration process. Both reactions occur simultaneously and in competition at the same active site. The chain is Ribulose bisphosphate carboxylase large chain from Pinus radiata (Monterey pine).